The chain runs to 389 residues: Succinate--CoA ligase [ADP-forming] subunit beta (389 aa).

The region spanning 9–236 (RDMFEAHGVP…KDSADPLEAK (228 aa)) is the ATP-grasp domain. ATP is bound by residues lysine 45, 52–54 (GRG), alanine 94, and glutamate 99. Positions 191 and 205 each coordinate Mg(2+). Substrate is bound by residues asparagine 256 and 318 to 320 (GIT).

It belongs to the succinate/malate CoA ligase beta subunit family. As to quaternary structure, heterotetramer of two alpha and two beta subunits. Mg(2+) is required as a cofactor.

It catalyses the reaction succinate + ATP + CoA = succinyl-CoA + ADP + phosphate. It carries out the reaction GTP + succinate + CoA = succinyl-CoA + GDP + phosphate. The protein operates within carbohydrate metabolism; tricarboxylic acid cycle; succinate from succinyl-CoA (ligase route): step 1/1. Its function is as follows. Succinyl-CoA synthetase functions in the citric acid cycle (TCA), coupling the hydrolysis of succinyl-CoA to the synthesis of either ATP or GTP and thus represents the only step of substrate-level phosphorylation in the TCA. The beta subunit provides nucleotide specificity of the enzyme and binds the substrate succinate, while the binding sites for coenzyme A and phosphate are found in the alpha subunit. The chain is Succinate--CoA ligase [ADP-forming] subunit beta from Renibacterium salmoninarum (strain ATCC 33209 / DSM 20767 / JCM 11484 / NBRC 15589 / NCIMB 2235).